A 414-amino-acid polypeptide reads, in one-letter code: MRTERVSPLLALGILVAGLCSRVHCLPENVTPEEQHKVTSVDGHSLASSNTDFAFSLYKQLALKDPNKNVIFSPLSVSIALAFLSLGAHGPTVTEILEGLKFNLTETPETEIHQGFQHLLQTFNQPSNQLQLSVGNAIFVQEELKLLDKFIEDARVLYSSEAFPTNFRDPEAAKSLINDYVKNKTQGKIEELFKDLSPRTELVLVNYVYFKAQWKTRFDPKHTEKTEFHVSDNKTVEVPMMTLDLETPYFRDEELGCTLVELTYTSNDSALFILPDKGKMQDLEAKLTPEMLTRWRNSLQPRRIHELYLPKFSIKSNYELNDTLSQMGIKKIFTDADLSGITGTADLVVSQVVHGAALDVDEEGTEGAAATGIGIERTFLRIIVRVNRPFLIAVVLKDTQSIIFLGKVTNPSEA.

Positions 1-25 (MRTERVSPLLALGILVAGLCSRVHC) are cleaved as a signal peptide. N103, N183, N233, N267, and N321 each carry an N-linked (GlcNAc...) asparagine glycan.

This sequence belongs to the serpin family. In terms of assembly, homodimer.

It localises to the cytoplasmic vesicle. It is found in the secretory vesicle. Its subcellular location is the chromaffin granule. The protein localises to the secreted. Serine protease inhibitor. The polypeptide is Serpin A3-6 (Bos taurus (Bovine)).